Reading from the N-terminus, the 102-residue chain is Protein CASC2, isoform 3 (102 aa).

As to expression, expressed in normal and neoplastic endometrial tissues.

Functionally, may act as a potential tumor suppressor. The protein is Protein CASC2, isoform 3 (CASC2) of Homo sapiens (Human).